Reading from the N-terminus, the 256-residue chain is Pimeloyl-[acyl-carrier protein] methyl ester esterase (256 aa).

Residues 15–242 (HLVLLHGWGL…AAHAPFISHP (228 aa)) form the AB hydrolase-1 domain. Substrate contacts are provided by residues Trp22, 82–83 (SL), and 143–147 (FLALQ). The active-site Nucleophile is Ser82. Active-site residues include Asp207 and His235. His235 is a substrate binding site.

Belongs to the AB hydrolase superfamily. Carboxylesterase BioH family. As to quaternary structure, monomer.

It is found in the cytoplasm. The catalysed reaction is 6-carboxyhexanoyl-[ACP] methyl ester + H2O = 6-carboxyhexanoyl-[ACP] + methanol + H(+). It participates in cofactor biosynthesis; biotin biosynthesis. Its function is as follows. The physiological role of BioH is to remove the methyl group introduced by BioC when the pimeloyl moiety is complete. It allows to synthesize pimeloyl-ACP via the fatty acid synthetic pathway through the hydrolysis of the ester bonds of pimeloyl-ACP esters. In Escherichia fergusonii (strain ATCC 35469 / DSM 13698 / CCUG 18766 / IAM 14443 / JCM 21226 / LMG 7866 / NBRC 102419 / NCTC 12128 / CDC 0568-73), this protein is Pimeloyl-[acyl-carrier protein] methyl ester esterase.